The sequence spans 462 residues: Hemopexin (462 aa).

Positions Met-1–Ala-23 are cleaved as a signal peptide. O-linked (GalNAc...) threonine glycosylation is found at Thr-24 and Thr-29. Residues Thr-29 to Glu-48 are disordered. The interval Ser-30–Thr-40 is O-glycosylated at one site. Residues Gly-38–Glu-48 are compositionally biased toward basic and acidic residues. 3 cysteine pairs are disulfide-bonded: Cys-50-Cys-231, Cys-149-Cys-154, and Cys-188-Cys-200. Hemopexin repeat units lie at residues Gly-53–Phe-93, Pro-94–Ile-139, Pro-140–Ala-184, and Val-185–Cys-231. Asn-64 carries an N-linked (GlcNAc...) (complex) asparagine glycan. His-79 provides a ligand contact to heme. His-150 lines the heme pocket. N-linked (GlcNAc...) (complex) asparagine glycosylation occurs at Asn-187. His-236 is a binding site for heme. N-linked (GlcNAc...) asparagine glycans are attached at residues Asn-240 and Asn-246. Cystine bridges form between Cys-257-Cys-460, Cys-366-Cys-408, and Cys-418-Cys-435. 4 Hemopexin repeats span residues Pro-259 to Gly-304, Pro-305 to Pro-352, Leu-357 to Leu-396, and His-400 to Gln-450. His-293 is a binding site for heme. An N-linked (GlcNAc...) (complex) asparagine glycan is attached at Asn-453.

The protein belongs to the hemopexin family. Interacts with FLVCR1. In terms of assembly, (Microbial infection) Interacts with hepatitis E virus/HEV protein ORF3. Post-translationally, N- and O-glycosylated. O-glycosylated with core 1 or possibly core 8 glycans. O-glycosylation in the 30-40 region is minor compared to glycosylation at Thr-24 and Thr-29. Expressed by the liver and secreted in plasma.

It localises to the secreted. Functionally, binds heme and transports it to the liver for breakdown and iron recovery, after which the free hemopexin returns to the circulation. The polypeptide is Hemopexin (HPX) (Homo sapiens (Human)).